Reading from the N-terminus, the 162-residue chain is Dihydrofolate reductase type 3 (162 aa).

Residues 2 to 160 enclose the DHFR domain; the sequence is LISLIAALAH…YACEFVTLSR (159 aa).

Belongs to the dihydrofolate reductase family. As to quaternary structure, monomer.

It carries out the reaction (6S)-5,6,7,8-tetrahydrofolate + NADP(+) = 7,8-dihydrofolate + NADPH + H(+). Its pathway is cofactor biosynthesis; tetrahydrofolate biosynthesis; 5,6,7,8-tetrahydrofolate from 7,8-dihydrofolate: step 1/1. Key enzyme in folate metabolism. Catalyzes an essential reaction for de novo glycine and purine synthesis, and for DNA precursor synthesis. This chain is Dihydrofolate reductase type 3 (dhfrIII), found in Salmonella typhimurium.